The following is a 180-amino-acid chain: NADH-quinone oxidoreductase subunit I (180 aa).

4Fe-4S ferredoxin-type domains are found at residues 50–80 (LTRD…LQKA) and 90–119 (EFFR…LTPD). Residues C60, C63, C66, C70, C99, C102, C105, and C109 each contribute to the [4Fe-4S] cluster site.

Belongs to the complex I 23 kDa subunit family. NDH-1 is composed of 13 different subunits. Subunits NuoA, H, J, K, L, M, N constitute the membrane sector of the complex. The cofactor is [4Fe-4S] cluster.

The protein localises to the cell inner membrane. The enzyme catalyses a quinone + NADH + 5 H(+)(in) = a quinol + NAD(+) + 4 H(+)(out). In terms of biological role, NDH-1 shuttles electrons from NADH, via FMN and iron-sulfur (Fe-S) centers, to quinones in the respiratory chain. The immediate electron acceptor for the enzyme in this species is believed to be ubiquinone. Couples the redox reaction to proton translocation (for every two electrons transferred, four hydrogen ions are translocated across the cytoplasmic membrane), and thus conserves the redox energy in a proton gradient. This chain is NADH-quinone oxidoreductase subunit I, found in Yersinia pseudotuberculosis serotype O:1b (strain IP 31758).